A 346-amino-acid chain; its full sequence is Dehydrogenase orf1 (346 aa).

43 to 48 (VDYATQ) serves as a coordination point for NADP(+). Position 133–140 (133–140 (LAFSTAIV)) interacts with substrate. NADP(+) contacts are provided by residues 170-173 (ATSV), 193-196 (SPHN), Tyr211, and 251-252 (LN). Substrate is bound at residue 269–273 (APPNV). 336–337 (VS) provides a ligand contact to NADP(+).

It belongs to the zinc-containing alcohol dehydrogenase family.

Its pathway is secondary metabolite biosynthesis. Its function is as follows. Dehydrogenase; part of the gene cluster that mediates the biosynthesis of nigerpyrone and its derivatives carbonarone A and pestalamide A. The biosynthesis pathway begins with the polyketide assembly by epaA to form phenylacetyl triketide precursor from successive condensation of two malonyl-CoA, presumably with one phenylacetyl-CoA starter unit produced by the phenylacetyl-CoA ligase epaB. For the nigerpyrone biosynthesis, the reactive polyketide chain is released as an aldehyde through the R-domain. A nonenzymatic cyclization and dehydration may create nigerpyrone. For the biosynthesis of carbonarone A and pestalamide A, an extra methyl group is added through the C-methyltransferase domain. Several further steps involving the dehydrogenase orf1, the cytochrome P450 monooxygenase orf2 and the FAD-dependent monooxygenase orf3 are required to form a carbonarone A precursor which is converted to carbonarone A via cyclization. The O-acetyltransferase epaC could catalyze the transfer of 2-methylsuccinyl-CoA, a common intermediate in the ethylmalonyl-CoA pathway, to generate the final product pestalamide A. This is Dehydrogenase orf1 from Aspergillus niger (strain ATCC MYA-4892 / CBS 513.88 / FGSC A1513).